Here is a 130-residue protein sequence, read N- to C-terminus: uncharacterized protein (130 aa).

Disordered stretches follow at residues 1 to 47 and 78 to 130; these read MTFY…QSNT and QTLE…SESS. The segment covering 13-33 has biased composition (polar residues); it reads QWKQLQTQQNKKNSPRPVTSS. Over residues 86-110 the composition is skewed to basic residues; the sequence is PSKHKRKRTKYRRTKKSKHHSRKKT. Over residues 117–130 the composition is skewed to basic and acidic residues; sequence SERDSTTGRESESS.

This is an uncharacterized protein from Torque teno mini virus 1 (isolate TLMV-CBD279).